The sequence spans 239 residues: RNA polymerase sigma-E factor (239 aa).

Positions 1 to 29 are cleaved as a propeptide — removed by SpoIIGA; sequence MKKLKLRLTHLWYKLLMKLGLKSDEVYYI. The Polymerase core binding motif lies at 86 to 99; sequence DLISIGTIGLIKAV. A DNA-binding region (H-T-H motif) is located at residues 206–225; it reads QKDVADMMGISQSYISRLEK.

Belongs to the sigma-70 factor family. Post-translationally, proteolytically cleaved in the N-terminus by SpoIIGA to yield the active peptide.

Functionally, sigma factors are initiation factors that promote the attachment of RNA polymerase to specific initiation sites and are then released. This sigma factor is responsible for the expression of sporulation specific genes. This Bacillus subtilis (strain 168) protein is RNA polymerase sigma-E factor (sigE).